Consider the following 121-residue polypeptide: NADH-quinone oxidoreductase subunit A 1 (121 aa).

A run of 3 helical transmembrane segments spans residues 11-31, 65-85, and 90-110; these read IAIF…APFA, LVSI…PWAV, and MGWF…VGFI.

This sequence belongs to the complex I subunit 3 family. In terms of assembly, NDH-1 is composed of 14 different subunits. Subunits NuoA, H, J, K, L, M, N constitute the membrane sector of the complex.

Its subcellular location is the cell inner membrane. The catalysed reaction is a quinone + NADH + 5 H(+)(in) = a quinol + NAD(+) + 4 H(+)(out). In terms of biological role, NDH-1 shuttles electrons from NADH, via FMN and iron-sulfur (Fe-S) centers, to quinones in the respiratory chain. The immediate electron acceptor for the enzyme in this species is believed to be ubiquinone. Couples the redox reaction to proton translocation (for every two electrons transferred, four hydrogen ions are translocated across the cytoplasmic membrane), and thus conserves the redox energy in a proton gradient. This is NADH-quinone oxidoreductase subunit A 1 from Rhizobium meliloti (strain 1021) (Ensifer meliloti).